A 201-amino-acid chain; its full sequence is Transmembrane 4 L6 family member 18 (201 aa).

Over 1-9 (MGSRKCGGC) the chain is Cytoplasmic. Residues 10–30 (LSCLLIPLALWSIIVNILLYF) form a helical membrane-spanning segment. At 31 to 49 (PNGQTSYASSNKLTNYVWY) the chain is on the extracellular side. A helical transmembrane segment spans residues 50–70 (FEGICFSGIMMLIVTTVLLVL). The Cytoplasmic portion of the chain corresponds to 71–93 (ENNNNYKCCQSENCSKKYVTLLS). The chain crosses the membrane as a helical span at residues 94 to 114 (IIFSSLGIAFSGYCLVISALG). Residues 115-157 (LVQGPYCRTLDGWEYAFEGTAGRFLTDSSIWIQCLEPAHVVEW) are Extracellular-facing. A helical transmembrane segment spans residues 158 to 178 (NIILFSILITLSGLQVIICLI). Residues 179-201 (RVVMQLSKILCGSYSVIFQPGII) lie on the Cytoplasmic side of the membrane.

The protein belongs to the L6 tetraspanin family.

The protein localises to the membrane. The chain is Transmembrane 4 L6 family member 18 (TM4SF18) from Homo sapiens (Human).